Consider the following 72-residue polypeptide: Translation initiation factor IF-1 (72 aa).

Residues 1–72 (MAKEDMIEVE…TRGRITYRFK (72 aa)) form the S1-like domain.

The protein belongs to the IF-1 family. In terms of assembly, component of the 30S ribosomal translation pre-initiation complex which assembles on the 30S ribosome in the order IF-2 and IF-3, IF-1 and N-formylmethionyl-tRNA(fMet); mRNA recruitment can occur at any time during PIC assembly.

The protein resides in the cytoplasm. In terms of biological role, one of the essential components for the initiation of protein synthesis. Stabilizes the binding of IF-2 and IF-3 on the 30S subunit to which N-formylmethionyl-tRNA(fMet) subsequently binds. Helps modulate mRNA selection, yielding the 30S pre-initiation complex (PIC). Upon addition of the 50S ribosomal subunit IF-1, IF-2 and IF-3 are released leaving the mature 70S translation initiation complex. The polypeptide is Translation initiation factor IF-1 (Enterococcus faecalis (strain ATCC 700802 / V583)).